Reading from the N-terminus, the 361-residue chain is D-alanine--D-alanine ligase (361 aa).

One can recognise an ATP-grasp domain in the interval 134–344 (KLLLKSFNIP…FKDLVDNLIN (211 aa)). ATP is bound at residue 167–222 (REALGYPVIVKPAVLGSSIGINVAYSENQIEFFIEEALKYDLTILIEKFIEAREIE). Mg(2+) is bound by residues Asp-297, Glu-311, and Asn-313.

It belongs to the D-alanine--D-alanine ligase family. Requires Mg(2+) as cofactor. Mn(2+) serves as cofactor.

The protein resides in the cytoplasm. The enzyme catalyses 2 D-alanine + ATP = D-alanyl-D-alanine + ADP + phosphate + H(+). It participates in cell wall biogenesis; peptidoglycan biosynthesis. Functionally, cell wall formation. This is D-alanine--D-alanine ligase from Borrelia garinii subsp. bavariensis (strain ATCC BAA-2496 / DSM 23469 / PBi) (Borreliella bavariensis).